The primary structure comprises 300 residues: NADH-cytochrome b5 reductase 1 (300 aa).

The helical transmembrane segment at 8-28 threads the bilayer; the sequence is PLVVFATVATIIISFVTLYFF. Positions 34-45 are enriched in low complexity; sequence SSTTSSSSSSSS. Residues 34 to 54 are disordered; the sequence is SSTTSSSSSSSSKSKKGSPAL. Residues 57–160 enclose the FAD-binding FR-type domain; it reads DKFQKFPLIS…RGPKGFFTYT (104 aa). FAD contacts are provided by residues 140 to 155 and 166 to 198; these read AEKQ…GPKG and SLGL…KVHL.

The protein belongs to the flavoprotein pyridine nucleotide cytochrome reductase family. Monomer. Component of the 2-(3-amino-3-carboxypropyl)histidine synthase complex composed of DPH1, DPH2, DPH3 and a NADH-dependent reductase, predominantly CBR1. FAD serves as cofactor.

The protein resides in the mitochondrion outer membrane. It carries out the reaction 2 Fe(III)-[cytochrome b5] + NADH = 2 Fe(II)-[cytochrome b5] + NAD(+) + H(+). It catalyses the reaction 2 Fe(3+)-[Dph3] + NADH = 2 Fe(2+)-[Dph3] + NAD(+) + H(+). It functions in the pathway protein modification; peptidyl-diphthamide biosynthesis. NADH-dependent reductase for DPH3 and cytochrome b5. Required for the first step of diphthamide biosynthesis, a post-translational modification of histidine which occurs in elongation factor 2. DPH1 and DPH2 transfer a 3-amino-3-carboxypropyl (ACP) group from S-adenosyl-L-methionine (SAM) to a histidine residue, the reaction is assisted by a reduction system comprising DPH3 and a NADH-dependent reductase, predominantly CBR1. By reducing DPH3, also involved in the formation of the tRNA wobble base modification mcm5s 2U (5-methoxycarbonylmethyl-2-thiouridine), mediated by the elongator complex. The cytochrome b5/NADH cytochrome b5 reductase electron transfer system supports the catalytic activity of several sterol biosynthetic enzymes. In Lodderomyces elongisporus (strain ATCC 11503 / CBS 2605 / JCM 1781 / NBRC 1676 / NRRL YB-4239) (Yeast), this protein is NADH-cytochrome b5 reductase 1 (CBR1).